The chain runs to 516 residues: Probable cytochrome P450 9f2 (516 aa).

Cys-460 lines the heme pocket.

This sequence belongs to the cytochrome P450 family. Heme is required as a cofactor.

It is found in the endoplasmic reticulum membrane. It localises to the microsome membrane. Its function is as follows. May be involved in the metabolism of insect hormones and in the breakdown of synthetic insecticides. This is Probable cytochrome P450 9f2 (Cyp9f2) from Drosophila melanogaster (Fruit fly).